A 223-amino-acid chain; its full sequence is Leucyl/phenylalanyl-tRNA--protein transferase (223 aa).

Belongs to the L/F-transferase family.

It is found in the cytoplasm. The enzyme catalyses N-terminal L-lysyl-[protein] + L-leucyl-tRNA(Leu) = N-terminal L-leucyl-L-lysyl-[protein] + tRNA(Leu) + H(+). The catalysed reaction is N-terminal L-arginyl-[protein] + L-leucyl-tRNA(Leu) = N-terminal L-leucyl-L-arginyl-[protein] + tRNA(Leu) + H(+). It catalyses the reaction L-phenylalanyl-tRNA(Phe) + an N-terminal L-alpha-aminoacyl-[protein] = an N-terminal L-phenylalanyl-L-alpha-aminoacyl-[protein] + tRNA(Phe). In terms of biological role, functions in the N-end rule pathway of protein degradation where it conjugates Leu, Phe and, less efficiently, Met from aminoacyl-tRNAs to the N-termini of proteins containing an N-terminal arginine or lysine. In Dinoroseobacter shibae (strain DSM 16493 / NCIMB 14021 / DFL 12), this protein is Leucyl/phenylalanyl-tRNA--protein transferase.